A 327-amino-acid polypeptide reads, in one-letter code: MSHLAELVASAKAAISQASDVAALDNVRVEYLGKKGHLTLQMTTLRELPPEERPAAGAVINEAKEQVQQALNARKAELESAALNARLAAETIDVSLPGRRIENGGLHPVTRTIDRIESFFGELGFTVATGPEIEDDYHNFDALNIPGHHPARADHDTFWFDATRLLRTQTSGVQIRTMKAQQPPIRIIAPGRVYRNDYDQTHTPMFHQMEGLIVDTNISFTNLKGTLHDFLRNFFEEDLQIRFRPSYFPFTEPSAEVDVMGKNGKWLEVLGCGMVHPNVLRNVGIDPEVYSGFAFGMGMERLTMLRYGVTDLRSFFENDLRFLKQFK.

Glu252 contacts Mg(2+).

The protein belongs to the class-II aminoacyl-tRNA synthetase family. Phe-tRNA synthetase alpha subunit type 1 subfamily. Tetramer of two alpha and two beta subunits. Mg(2+) is required as a cofactor.

Its subcellular location is the cytoplasm. It carries out the reaction tRNA(Phe) + L-phenylalanine + ATP = L-phenylalanyl-tRNA(Phe) + AMP + diphosphate + H(+). This Escherichia coli O127:H6 (strain E2348/69 / EPEC) protein is Phenylalanine--tRNA ligase alpha subunit.